We begin with the raw amino-acid sequence, 573 residues long: NEDD4-binding protein 3-B (573 aa).

3 disordered regions span residues E119–P138, C173–S220, and G384–D405. The span at L125–R135 shows a compositional bias: basic and acidic residues. Positions S186–S196 are enriched in low complexity. Polar residues-rich tracts occupy residues D207–S220 and K392–P401. The stretch at E287–S474 forms a coiled coil.

The protein belongs to the N4BP3 family.

It localises to the cytoplasmic vesicle. It is found in the cell projection. Its subcellular location is the axon. The protein resides in the dendrite. In terms of biological role, plays a role in axon and dendrite arborization during cranial nerve development. Also important for neural crest migration and early development of other anterior structures including eye, brain and cranial cartilage. The protein is NEDD4-binding protein 3-B of Xenopus laevis (African clawed frog).